Reading from the N-terminus, the 198-residue chain is Small ribosomal subunit protein eS1 (198 aa).

It belongs to the eukaryotic ribosomal protein eS1 family.

This chain is Small ribosomal subunit protein eS1, found in Methanospirillum hungatei JF-1 (strain ATCC 27890 / DSM 864 / NBRC 100397 / JF-1).